A 293-amino-acid chain; its full sequence is ELMO domain-containing protein 2 (293 aa).

The ELMO domain maps to 126–282 (QHEELLMKLW…KFHEKIKGLL (157 aa)).

In terms of tissue distribution, alveolar cells (morphologically type II cells) and alveolar macrophages (at protein level). Expressed in brain, colon, heart, kidney, liver, lung, muscle, placenta, small intestine, spleen, stomach and testis. In lung it is expressed in alveolar macrophages and alveolar walls.

Acts as a GTPase-activating protein (GAP) toward guanine nucleotide exchange factors like ARL2, ARL3, ARF1 and ARF6, but not for GTPases outside the Arf family. Regulates IFN-related antiviral responses. The protein is ELMO domain-containing protein 2 (ELMOD2) of Homo sapiens (Human).